We begin with the raw amino-acid sequence, 494 residues long: GTPase Der (494 aa).

EngA-type G domains are found at residues 3–166 (PVIA…MDAE) and 207–380 (IKLA…DCST). GTP contacts are provided by residues 9-16 (GRPNVGKS), 56-60 (DTGGI), 118-121 (NKTD), 213-220 (GRPNVGKS), 260-264 (DTAGV), and 325-328 (NKWD). Residues 381 to 465 (KRVGTSLLTR…PIRIQFKEGE (85 aa)) form the KH-like domain.

The protein belongs to the TRAFAC class TrmE-Era-EngA-EngB-Septin-like GTPase superfamily. EngA (Der) GTPase family. In terms of assembly, associates with the 50S ribosomal subunit.

Its function is as follows. GTPase that plays an essential role in the late steps of ribosome biogenesis. The sequence is that of GTPase Der from Yersinia enterocolitica serotype O:8 / biotype 1B (strain NCTC 13174 / 8081).